Reading from the N-terminus, the 234-residue chain is Orotate phosphoribosyltransferase (234 aa).

Residue Lys30 participates in 5-phospho-alpha-D-ribose 1-diphosphate binding. 38 to 39 (FF) is an orotate binding site. 5-phospho-alpha-D-ribose 1-diphosphate is bound by residues 80-81 (YK), Arg110, Lys111, Lys114, His116, and 136-144 (DDVITAGTA). Residues Thr140 and Arg168 each coordinate orotate.

Belongs to the purine/pyrimidine phosphoribosyltransferase family. PyrE subfamily. As to quaternary structure, homodimer.

The enzyme catalyses orotidine 5'-phosphate + diphosphate = orotate + 5-phospho-alpha-D-ribose 1-diphosphate. It participates in pyrimidine metabolism; UMP biosynthesis via de novo pathway; UMP from orotate: step 1/2. Functionally, catalyzes the transfer of a ribosyl phosphate group from 5-phosphoribose 1-diphosphate to orotate, leading to the formation of orotidine monophosphate (OMP). The protein is Orotate phosphoribosyltransferase (URA5) of Metarhizium anisopliae (Entomophthora anisopliae).